The chain runs to 56 residues: Metallothionein (56 aa).

Residues Cys-9, Cys-11, Cys-14, Cys-16, Cys-32, Cys-36, His-40, Cys-47, His-49, Cys-52, and Cys-54 each contribute to the Zn(2+) site.

Belongs to the metallothionein superfamily. Type 14 family.

Its function is as follows. May play a role in essential metal ion homeostasis (especially zinc homeostasis) and resistance to certain non-essential metal ions. Binds four zinc ions. This chain is Metallothionein (smtA), found in Synechococcus elongatus (strain ATCC 33912 / PCC 7942 / FACHB-805) (Anacystis nidulans R2).